Reading from the N-terminus, the 102-residue chain is MANKKIRIRLKAYEHRTLDTAAEKIVETATRTGATVAGPVPLPTERSLYTIIRATHKYKDSREQFEMRTHKRLVDIINPTQKTVDALMKLDLPSGVNVEIKL.

It belongs to the universal ribosomal protein uS10 family. In terms of assembly, part of the 30S ribosomal subunit.

Functionally, involved in the binding of tRNA to the ribosomes. This chain is Small ribosomal subunit protein uS10, found in Streptococcus pyogenes serotype M3 (strain SSI-1).